Consider the following 697-residue polypeptide: Potassium-transporting ATPase ATP-binding subunit (697 aa).

Transmembrane regions (helical) follow at residues 55 to 75 (PIMF…FLPS), 79 to 99 (SIPG…VLFA), 245 to 265 (LTLI…YLGF), and 271 to 291 (VLVA…LSAI). The active-site 4-aspartylphosphate intermediate is the aspartate 324. ATP is bound by residues aspartate 361, glutamate 365, 393–400 (FKAETRMS), and lysine 412. Residues aspartate 535 and aspartate 539 each contribute to the Mg(2+) site. 3 helical membrane-spanning segments follow: residues 605–625 (FAII…LNIM), 633–653 (AILS…PLAM), and 677–697 (GGVI…GLFI).

It belongs to the cation transport ATPase (P-type) (TC 3.A.3) family. Type IA subfamily. In terms of assembly, the system is composed of three essential subunits: KdpA, KdpB and KdpC.

It localises to the cell membrane. The enzyme catalyses K(+)(out) + ATP + H2O = K(+)(in) + ADP + phosphate + H(+). Functionally, part of the high-affinity ATP-driven potassium transport (or Kdp) system, which catalyzes the hydrolysis of ATP coupled with the electrogenic transport of potassium into the cytoplasm. This subunit is responsible for energy coupling to the transport system and for the release of the potassium ions to the cytoplasm. This is Potassium-transporting ATPase ATP-binding subunit from Bacillus cereus (strain B4264).